The chain runs to 309 residues: Tagatose-6-phosphate kinase 1 (309 aa).

The protein belongs to the carbohydrate kinase PfkB family. LacC subfamily.

It catalyses the reaction D-tagatofuranose 6-phosphate + ATP = D-tagatofuranose 1,6-bisphosphate + ADP + H(+). The protein operates within carbohydrate metabolism; D-tagatose 6-phosphate degradation; D-glyceraldehyde 3-phosphate and glycerone phosphate from D-tagatose 6-phosphate: step 1/2. This Streptococcus agalactiae serotype III (strain NEM316) protein is Tagatose-6-phosphate kinase 1.